We begin with the raw amino-acid sequence, 1111 residues long: uncharacterized protein (1111 aa).

Residues 1-31 (MIRKLMKIPPFFTALFASAMFTLSVSQGVLA) form the signal peptide. The next 11 helical transmembrane spans lie at 490–510 (LPYL…IFKF), 538–558 (LALL…LAVC), 572–592 (FWHW…WISL), 620–640 (IIVV…TDAG), 644–664 (DVLG…IIAP), 694–714 (IPVG…LNLI), 797–817 (FIWT…VTVV), 840–860 (SITL…YVLV), 885–905 (ITTL…FATL), 922–942 (GLGF…ILLF), and 1003–1023 (LVIS…QLLL).

Belongs to the MscS (TC 1.A.23) family.

The protein localises to the cell membrane. This is an uncharacterized protein from Haemophilus influenzae (strain ATCC 51907 / DSM 11121 / KW20 / Rd).